Reading from the N-terminus, the 359-residue chain is Probable dual-specificity RNA methyltransferase RlmN (359 aa).

The Proton acceptor role is filled by Glu-91. One can recognise a Radical SAM core domain in the interval Gln-97–Arg-329. A disulfide bond links Cys-104 and Cys-340. Residues Cys-111, Cys-115, and Cys-118 each coordinate [4Fe-4S] cluster. S-adenosyl-L-methionine-binding positions include Gly-163 to Glu-164, Ser-195, Ser-218 to His-220, and Asn-296. The active-site S-methylcysteine intermediate is Cys-340.

It belongs to the radical SAM superfamily. RlmN family. [4Fe-4S] cluster serves as cofactor.

The protein resides in the cytoplasm. The enzyme catalyses adenosine(2503) in 23S rRNA + 2 reduced [2Fe-2S]-[ferredoxin] + 2 S-adenosyl-L-methionine = 2-methyladenosine(2503) in 23S rRNA + 5'-deoxyadenosine + L-methionine + 2 oxidized [2Fe-2S]-[ferredoxin] + S-adenosyl-L-homocysteine. The catalysed reaction is adenosine(37) in tRNA + 2 reduced [2Fe-2S]-[ferredoxin] + 2 S-adenosyl-L-methionine = 2-methyladenosine(37) in tRNA + 5'-deoxyadenosine + L-methionine + 2 oxidized [2Fe-2S]-[ferredoxin] + S-adenosyl-L-homocysteine. Functionally, specifically methylates position 2 of adenine 2503 in 23S rRNA and position 2 of adenine 37 in tRNAs. The sequence is that of Probable dual-specificity RNA methyltransferase RlmN from Streptococcus pyogenes serotype M2 (strain MGAS10270).